The following is a 130-amino-acid chain: Small ribosomal subunit protein uS8 (130 aa).

It belongs to the universal ribosomal protein uS8 family. Part of the 30S ribosomal subunit. Contacts proteins S5 and S12.

In terms of biological role, one of the primary rRNA binding proteins, it binds directly to 16S rRNA central domain where it helps coordinate assembly of the platform of the 30S subunit. This Yersinia pseudotuberculosis serotype O:1b (strain IP 31758) protein is Small ribosomal subunit protein uS8.